The following is a 493-amino-acid chain: ATP synthase subunit beta, chloroplastic (493 aa).

Residue 170 to 177 coordinates ATP; sequence GGAGVGKT.

The protein belongs to the ATPase alpha/beta chains family. F-type ATPases have 2 components, CF(1) - the catalytic core - and CF(0) - the membrane proton channel. CF(1) has five subunits: alpha(3), beta(3), gamma(1), delta(1), epsilon(1). CF(0) has four main subunits: a(1), b(1), b'(1) and c(9-12).

It localises to the plastid. The protein localises to the chloroplast thylakoid membrane. It catalyses the reaction ATP + H2O + 4 H(+)(in) = ADP + phosphate + 5 H(+)(out). Functionally, produces ATP from ADP in the presence of a proton gradient across the membrane. The catalytic sites are hosted primarily by the beta subunits. This chain is ATP synthase subunit beta, chloroplastic, found in Chaetosphaeridium globosum (Charophycean green alga).